The sequence spans 93 residues: Small ribosomal subunit protein uS19 (93 aa).

The protein belongs to the universal ribosomal protein uS19 family.

Its function is as follows. Protein S19 forms a complex with S13 that binds strongly to the 16S ribosomal RNA. The protein is Small ribosomal subunit protein uS19 of Renibacterium salmoninarum (strain ATCC 33209 / DSM 20767 / JCM 11484 / NBRC 15589 / NCIMB 2235).